The following is a 162-amino-acid chain: Large ribosomal subunit protein uL10 (162 aa).

The protein belongs to the universal ribosomal protein uL10 family. In terms of assembly, part of the ribosomal stalk of the 50S ribosomal subunit. The N-terminus interacts with L11 and the large rRNA to form the base of the stalk. The C-terminus forms an elongated spine to which L12 dimers bind in a sequential fashion forming a multimeric L10(L12)X complex.

Forms part of the ribosomal stalk, playing a central role in the interaction of the ribosome with GTP-bound translation factors. The sequence is that of Large ribosomal subunit protein uL10 from Vibrio cholerae serotype O1 (strain ATCC 39541 / Classical Ogawa 395 / O395).